An 89-amino-acid polypeptide reads, in one-letter code: Small ribosomal subunit protein uS15 (89 aa).

This sequence belongs to the universal ribosomal protein uS15 family. Part of the 30S ribosomal subunit. Forms a bridge to the 50S subunit in the 70S ribosome, contacting the 23S rRNA.

In terms of biological role, one of the primary rRNA binding proteins, it binds directly to 16S rRNA where it helps nucleate assembly of the platform of the 30S subunit by binding and bridging several RNA helices of the 16S rRNA. Forms an intersubunit bridge (bridge B4) with the 23S rRNA of the 50S subunit in the ribosome. The chain is Small ribosomal subunit protein uS15 from Shewanella baltica (strain OS185).